Reading from the N-terminus, the 193-residue chain is Probable GTP-binding protein EngB (193 aa).

Residues 24 to 193 enclose the EngB-type G domain; that stretch reads NIPEIALAGR…ELKAALAELL (170 aa). Residues 32 to 39, 59 to 63, 77 to 80, 144 to 147, and 174 to 176 each bind GTP; these read GRSNVGKS, GKTRT, DLPG, TKAD, and FSA. Residues Ser-39 and Thr-61 each coordinate Mg(2+).

It belongs to the TRAFAC class TrmE-Era-EngA-EngB-Septin-like GTPase superfamily. EngB GTPase family. Mg(2+) is required as a cofactor.

Functionally, necessary for normal cell division and for the maintenance of normal septation. The chain is Probable GTP-binding protein EngB from Syntrophomonas wolfei subsp. wolfei (strain DSM 2245B / Goettingen).